The sequence spans 79 residues: Sec-independent protein translocase protein TatA (79 aa).

Residues 1–21 (MGGFTSIWHWVIVLLVIVLLF) traverse the membrane as a helical segment. Positions 46–79 (DDEEEAKNEPKTLDAQATQTKVHETSEIKSKQES) are disordered. Residues 66-79 (KVHETSEIKSKQES) show a composition bias toward basic and acidic residues.

Belongs to the TatA/E family. As to quaternary structure, the Tat system comprises two distinct complexes: a TatABC complex, containing multiple copies of TatA, TatB and TatC subunits, and a separate TatA complex, containing only TatA subunits. Substrates initially bind to the TatABC complex, which probably triggers association of the separate TatA complex to form the active translocon.

It is found in the cell inner membrane. Functionally, part of the twin-arginine translocation (Tat) system that transports large folded proteins containing a characteristic twin-arginine motif in their signal peptide across membranes. TatA could form the protein-conducting channel of the Tat system. In Helicobacter pylori (strain HPAG1), this protein is Sec-independent protein translocase protein TatA.